Reading from the N-terminus, the 211-residue chain is Transcription antitermination protein NusB (211 aa).

The interval 152-211 (PAKKERVANPFPSTPPKKPENVPNPFSTPFKKNSSEPIRNPFEGNKSPQPPQKTLRRKKK) is disordered. Residues 175 to 188 (NPFSTPFKKNSSEP) show a composition bias toward polar residues.

It belongs to the NusB family.

Functionally, involved in transcription antitermination. Required for transcription of ribosomal RNA (rRNA) genes. Binds specifically to the boxA antiterminator sequence of the ribosomal RNA (rrn) operons. This is Transcription antitermination protein NusB from Chloroherpeton thalassium (strain ATCC 35110 / GB-78).